Consider the following 856-residue polypeptide: DNA mismatch repair protein MutS (856 aa).

Gly607 to Ser614 lines the ATP pocket.

The protein belongs to the DNA mismatch repair MutS family.

This protein is involved in the repair of mismatches in DNA. It is possible that it carries out the mismatch recognition step. This protein has a weak ATPase activity. The polypeptide is DNA mismatch repair protein MutS (Lactobacillus delbrueckii subsp. bulgaricus (strain ATCC BAA-365 / Lb-18)).